We begin with the raw amino-acid sequence, 682 residues long: MQLEHCLSPSIMLSKKFLNVSSSYPHSGGSELVLHDHPIISTTDNLERSSPLKKITRGMTNQSDTDNFPDSKDSPGDVQRSKLSPVLDGVSELRHSFDGSAADRYLLSQSSQPQSAATAPSAMFPYPGQHGPAHPAFSIGSPSRYMAHHPVITNGAYNSLLSNSSPQGYPTAGYPYPQQYGHSYQGAPFYQFSSTQPGLVPGKAQVYLCNRPLWLKFHRHQTEMIITKQGRRMFPFLSFNISGLDPTAHYNIFVDVILADPNHWRFQGGKWVPCGKADTNVQGNRVYMHPDSPNTGAHWMRQEISFGKLKLTNNKGASNNNGQMVVLQSLHKYQPRLHVVEVNEDGTEDTSQPGRVQTFTFPETQFIAVTAYQNTDITQLKIDHNPFAKGFRDNYDTIYTGCDMDRLTPSPNDSPRSQIVPGARYAMAGSFLQDQFVSNYAKARFHPGAGAGPGPGTDRSVPHTNGLLSPQQAEDPGAPSPQRWFVTPANNRLDFAASAYDTATDFAGNAATLLSYAAAGVKALPLQAAGCTGRPLGYYADPSGWGARSPPQYCGTKSGSVLPCWPNSAAAAARMAGANPYLGEEAEGLAAERSPLPPGAAEDAKPKDLSDSSWIETPSSIKSIDSSDSGIYEQAKRRRISPADTPVSESSSPLKSEVLAQRDCEKNCAKDISGYYGFYSHS.

Disordered regions lie at residues 43 to 83 and 108 to 127; these read TDNL…RSKL and SQSS…FPYP. Polar residues predominate over residues 58–68; the sequence is GMTNQSDTDNF. The span at 108 to 122 shows a compositional bias: low complexity; the sequence is SQSSQPQSAATAPSA. The T-box DNA-binding region spans 213 to 393; it reads LWLKFHRHQT…HNPFAKGFRD (181 aa). Threonine 408 is subject to Phosphothreonine. Serine 410 carries the post-translational modification Phosphoserine. Disordered stretches follow at residues 447–483 and 588–658; these read PGAG…SPQR and GLAA…KSEV. Positions 462-472 are enriched in polar residues; sequence PHTNGLLSPQQ. Serine 594 carries the post-translational modification Phosphoserine. The segment covering 619 to 629 has biased composition (low complexity); sequence SSIKSIDSSDS. Serine 641 is subject to Phosphoserine.

Homodimer. Part of a complex containing CASK, TBR1 and TSPYL2; may modulate gene expression in response to neuronal synaptic activity. Interacts with FOXP2. Interacts with FOXP1. Interacts with BCL11A. Brain.

The protein resides in the nucleus. Its function is as follows. Transcriptional repressor involved in multiple aspects of cortical development, including neuronal migration, laminar and areal identity, and axonal projection. As transcriptional repressor of FEZF2, it blocks the formation of the corticospinal (CS) tract from layer 6 projection neurons, thereby restricting the origin of CS axons specifically to layer 5 neurons. The protein is T-box brain protein 1 (TBR1) of Homo sapiens (Human).